The chain runs to 181 residues: Large ribosomal subunit protein uL5 (181 aa).

It belongs to the universal ribosomal protein uL5 family. As to quaternary structure, part of the 50S ribosomal subunit; part of the 5S rRNA/L5/L18/L25 subcomplex. Contacts the 5S rRNA and the P site tRNA. Forms a bridge to the 30S subunit in the 70S ribosome.

Its function is as follows. This is one of the proteins that bind and probably mediate the attachment of the 5S RNA into the large ribosomal subunit, where it forms part of the central protuberance. In the 70S ribosome it contacts protein S13 of the 30S subunit (bridge B1b), connecting the 2 subunits; this bridge is implicated in subunit movement. Contacts the P site tRNA; the 5S rRNA and some of its associated proteins might help stabilize positioning of ribosome-bound tRNAs. In Rickettsia canadensis (strain McKiel), this protein is Large ribosomal subunit protein uL5.